Reading from the N-terminus, the 161-residue chain is RNA pyrophosphohydrolase (161 aa).

The Nudix hydrolase domain occupies 12–154 (PYRIGVGMVI…KRKLYKAVIN (143 aa)). The short motif at 46-67 (GGIILGETYSKAVLREMKEEIG) is the Nudix box element.

The protein belongs to the Nudix hydrolase family. RppH subfamily. Requires a divalent metal cation as cofactor.

Functionally, accelerates the degradation of transcripts by removing pyrophosphate from the 5'-end of triphosphorylated RNA, leading to a more labile monophosphorylated state that can stimulate subsequent ribonuclease cleavage. This Orientia tsutsugamushi (strain Boryong) (Rickettsia tsutsugamushi) protein is RNA pyrophosphohydrolase.